The primary structure comprises 466 residues: Ribulose bisphosphate carboxylase large chain (466 aa).

Lys5 is subject to N6,N6,N6-trimethyllysine. Substrate contacts are provided by Asn114 and Thr164. Lys166 (proton acceptor) is an active-site residue. Lys168 serves as a coordination point for substrate. Mg(2+) contacts are provided by Lys192, Asp194, and Glu195. Lys192 bears the N6-carboxylysine mark. His285 (proton acceptor) is an active-site residue. Residues Arg286, His318, and Ser370 each contribute to the substrate site.

It belongs to the RuBisCO large chain family. Type I subfamily. As to quaternary structure, heterohexadecamer of 8 large chains and 8 small chains; disulfide-linked. The disulfide link is formed within the large subunit homodimers. Mg(2+) serves as cofactor. The disulfide bond which can form in the large chain dimeric partners within the hexadecamer appears to be associated with oxidative stress and protein turnover.

It is found in the plastid. The protein resides in the chloroplast. The catalysed reaction is 2 (2R)-3-phosphoglycerate + 2 H(+) = D-ribulose 1,5-bisphosphate + CO2 + H2O. It carries out the reaction D-ribulose 1,5-bisphosphate + O2 = 2-phosphoglycolate + (2R)-3-phosphoglycerate + 2 H(+). Its function is as follows. RuBisCO catalyzes two reactions: the carboxylation of D-ribulose 1,5-bisphosphate, the primary event in carbon dioxide fixation, as well as the oxidative fragmentation of the pentose substrate in the photorespiration process. Both reactions occur simultaneously and in competition at the same active site. The sequence is that of Ribulose bisphosphate carboxylase large chain from Cucurbita pepo (Vegetable marrow).